Here is a 501-residue protein sequence, read N- to C-terminus: Aldehyde dehydrogenase, cytosolic 1 (501 aa).

An NAD(+)-binding site is contributed by 246–251 (GSTEVG). E269 functions as the Proton acceptor in the catalytic mechanism. C303 functions as the Nucleophile in the catalytic mechanism.

This sequence belongs to the aldehyde dehydrogenase family. In terms of assembly, homotetramer. In terms of tissue distribution, eye specific, with very high expression in the lens.

It is found in the cytoplasm. It catalyses the reaction an aldehyde + NAD(+) + H2O = a carboxylate + NADH + 2 H(+). The protein operates within alcohol metabolism; ethanol degradation; acetate from ethanol: step 2/2. In terms of biological role, major component of the eye of elephant shrews, which in contrast to other mammals, possesses both a lens- and a non-lens class-1 aldehyde dehydrogenase 1. This eye-specific form is a structural protein of the lens and, in other part of the eye, serves as the major form of ALDH1. Can convert/oxidize retinaldehyde to retinoic acid. This chain is Aldehyde dehydrogenase, cytosolic 1 (ALDH1), found in Elephantulus edwardii (Cape long-eared elephant shrew).